Consider the following 459-residue polypeptide: Nitrogenase molybdenum-iron protein beta chain (459 aa).

[8Fe-7S] cluster contacts are provided by Cys21, Cys46, Cys104, and Ser143.

Belongs to the NifD/NifK/NifE/NifN family. As to quaternary structure, tetramer of two alpha and two beta chains. Forms complex with the iron protein (nitrogenase component 2). Requires [8Fe-7S] cluster as cofactor.

The enzyme catalyses N2 + 8 reduced [2Fe-2S]-[ferredoxin] + 16 ATP + 16 H2O = H2 + 8 oxidized [2Fe-2S]-[ferredoxin] + 2 NH4(+) + 16 ADP + 16 phosphate + 6 H(+). In terms of biological role, this molybdenum-iron protein is part of the nitrogenase complex that catalyzes the key enzymatic reactions in nitrogen fixation. The polypeptide is Nitrogenase molybdenum-iron protein beta chain (nifK) (Methanothermobacter marburgensis (strain ATCC BAA-927 / DSM 2133 / JCM 14651 / NBRC 100331 / OCM 82 / Marburg) (Methanobacterium thermoautotrophicum)).